We begin with the raw amino-acid sequence, 110 residues long: uncharacterized protein (110 aa).

To M.jannaschii MJ0123 and A.aeolicus AA15.

This is an uncharacterized protein from Methanocaldococcus jannaschii (strain ATCC 43067 / DSM 2661 / JAL-1 / JCM 10045 / NBRC 100440) (Methanococcus jannaschii).